The sequence spans 241 residues: tRNA (guanine-N(7)-)-methyltransferase B (241 aa).

S-adenosyl-L-methionine is bound by residues G61, E84, R86, N117, A118, and L137. D140 is a catalytic residue. Residues 141–149 form an alphaC helix region; the sequence is PHFKKTKHK. Residues T215 and E217 each contribute to the S-adenosyl-L-methionine site. The alpha6 helix stretch occupies residues 215–223; it reads TEEGKKVQR.

It belongs to the class I-like SAM-binding methyltransferase superfamily. TrmB family. Catalytic component of the METTL1-WDR4 complex, composed of mettl1 and wdr4.

It localises to the nucleus. It carries out the reaction guanosine(46) in tRNA + S-adenosyl-L-methionine = N(7)-methylguanosine(46) in tRNA + S-adenosyl-L-homocysteine. The enzyme catalyses a guanosine in mRNA + S-adenosyl-L-methionine = an N(7)-methylguanosine in mRNA + S-adenosyl-L-homocysteine. The catalysed reaction is a guanosine in miRNA + S-adenosyl-L-methionine = an N(7)-methylguanosine in miRNA + S-adenosyl-L-homocysteine. It functions in the pathway tRNA modification; N(7)-methylguanine-tRNA biosynthesis. Functionally, catalytic component of METTL1-WDR4 methyltransferase complex that mediates the formation of N(7)-methylguanine in a subset of RNA species, such as tRNAs, mRNAs and microRNAs (miRNAs). Catalyzes the formation of N(7)-methylguanine at position 46 (m7G46) in a large subset of tRNAs that contain the 5'-RAGGU-3' motif within the variable loop. M7G46 interacts with C13-G22 in the D-loop to stabilize tRNA tertiary structure and protect tRNAs from decay. Also acts as a methyltransferase for a subset of internal N(7)-methylguanine in mRNAs. Internal N(7)-methylguanine methylation of mRNAs in response to stress promotes their relocalization to stress granules, thereby suppressing their translation. Also methylates a specific subset of miRNAs. This chain is tRNA (guanine-N(7)-)-methyltransferase B (mettl1-B), found in Xenopus tropicalis (Western clawed frog).